A 427-amino-acid chain; its full sequence is UPF0229 protein YeaH (427 aa).

The segment at 87–110 is disordered; it reads RIERSQGGGGGSGSGQGQASQDGE. Residues 92-102 are compositionally biased toward gly residues; sequence QGGGGGSGSGQ.

The protein belongs to the UPF0229 family.

The polypeptide is UPF0229 protein YeaH (Escherichia coli O6:K15:H31 (strain 536 / UPEC)).